A 345-amino-acid polypeptide reads, in one-letter code: Protein RecA (345 aa).

68-75 is a binding site for ATP; that stretch reads GVESSGKT.

It belongs to the RecA family.

Its subcellular location is the cytoplasm. Can catalyze the hydrolysis of ATP in the presence of single-stranded DNA, the ATP-dependent uptake of single-stranded DNA by duplex DNA, and the ATP-dependent hybridization of homologous single-stranded DNAs. It interacts with LexA causing its activation and leading to its autocatalytic cleavage. In Aquifex aeolicus (strain VF5), this protein is Protein RecA.